The sequence spans 224 residues: Octanoyltransferase (224 aa).

The region spanning glutamate 29–proline 224 is the BPL/LPL catalytic domain. Substrate is bound by residues arginine 68–histidine 75, alanine 157–glycine 159, and glycine 170–alanine 172. Catalysis depends on cysteine 188, which acts as the Acyl-thioester intermediate.

It belongs to the LipB family.

Its subcellular location is the cytoplasm. It carries out the reaction octanoyl-[ACP] + L-lysyl-[protein] = N(6)-octanoyl-L-lysyl-[protein] + holo-[ACP] + H(+). Its pathway is protein modification; protein lipoylation via endogenous pathway; protein N(6)-(lipoyl)lysine from octanoyl-[acyl-carrier-protein]: step 1/2. Functionally, catalyzes the transfer of endogenously produced octanoic acid from octanoyl-acyl-carrier-protein onto the lipoyl domains of lipoate-dependent enzymes. Lipoyl-ACP can also act as a substrate although octanoyl-ACP is likely to be the physiological substrate. This chain is Octanoyltransferase, found in Polaromonas naphthalenivorans (strain CJ2).